The chain runs to 143 residues: Cytochrome c-type biogenesis protein CcmE (143 aa).

At 1 to 8 (MTPVRRRK) the chain is on the cytoplasmic side. Residues 9–29 (LFILLFALSVLSAAAALVLYA) form a helical; Signal-anchor for type II membrane protein membrane-spanning segment. Residues 30 to 143 (LRQNISLFYT…KSALADKVKQ (114 aa)) lie on the Periplasmic side of the membrane. Residues His124 and Tyr128 each coordinate heme.

This sequence belongs to the CcmE/CycJ family.

It is found in the cell inner membrane. In terms of biological role, heme chaperone required for the biogenesis of c-type cytochromes. Transiently binds heme delivered by CcmC and transfers the heme to apo-cytochromes in a process facilitated by CcmF and CcmH. The protein is Cytochrome c-type biogenesis protein CcmE of Legionella pneumophila (strain Lens).